A 555-amino-acid chain; its full sequence is Carboxylesterase patB (555 aa).

Positions 1-16 (MLFTASLLLLLPWASA) are cleaved as a signal peptide. N-linked (GlcNAc...) asparagine glycosylation is found at Asn37 and Asn75. Ser258 (acyl-ester intermediate) is an active-site residue. Ser258 contributes to the substrate binding site. Asn311 carries an N-linked (GlcNAc...) asparagine glycan. Glu380 (charge relay system) is an active-site residue. N-linked (GlcNAc...) asparagine glycans are attached at residues Asn388 and Asn491.

It belongs to the type-B carboxylesterase/lipase family.

It localises to the cytoplasm. The protein resides in the cytosol. The enzyme catalyses a carboxylic ester + H2O = an alcohol + a carboxylate + H(+). The protein operates within mycotoxin biosynthesis; patulin biosynthesis. Carboxylesterase; part of the gene cluster that mediates the biosynthesis of patulin, an acetate-derived tetraketide mycotoxin produced by several fungal species that shows antimicrobial properties against several bacteria. The function of patB in patulin synthesis has still to be characterized. The pathway begins with the synthesis of 6-methylsalicylic acid by the polyketide synthase (PKS) patK via condensation of acetate and malonate units. The 6-methylsalicylic acid decarboxylase patG then catalyzes the decarboxylation of 6-methylsalicylic acid to yield m-cresol (also known as 3-methylphenol). These first reactions occur in the cytosol. The intermediate m-cresol is then transported into the endoplasmic reticulum where the cytochrome P450 monooxygenase patH converts it to m-hydroxybenzyl alcohol, which is further converted to gentisyl alcohol by the cytochrome P450 monooxygenase patI. The oxidoreductases patJ and patO further convert gentisyl alcohol to isoepoxydon in the vacuole. PatN catalyzes then the transformation of isoepoxydon into phyllostine. The cluster protein patF is responsible for the conversion from phyllostine to neopatulin whereas the alcohol dehydrogenase patD converts neopatulin to E-ascladiol. The steps between isoepoxydon and E-ascladiol occur in the cytosol, and E-ascladiol is probably secreted to the extracellular space by one of the cluster-specific transporters patC or patM. Finally, the secreted patulin synthase patE catalyzes the conversion of E-ascladiol to patulin. The polypeptide is Carboxylesterase patB (Aspergillus clavatus (strain ATCC 1007 / CBS 513.65 / DSM 816 / NCTC 3887 / NRRL 1 / QM 1276 / 107)).